We begin with the raw amino-acid sequence, 98 residues long: Small ribosomal subunit protein bS6c (98 aa).

The protein belongs to the bacterial ribosomal protein bS6 family.

It is found in the plastid. It localises to the chloroplast. Binds together with bS18 to 16S ribosomal RNA. The protein is Small ribosomal subunit protein bS6c of Phaeodactylum tricornutum (strain CCAP 1055/1).